We begin with the raw amino-acid sequence, 79 residues long: MTVEEKIIDAFDRLFMEDVSDIKDEDLFDAGVLDSLGTVELIVELENLFEIKVPISEFGREDWNTVNKIVEGVKELQNA.

Residues 1–77 (MTVEEKIIDA…KIVEGVKELQ (77 aa)) form the Carrier domain. The residue at position 35 (serine 35) is an O-(pantetheine 4'-phosphoryl)serine.

Belongs to the DltC family. In terms of processing, 4'-phosphopantetheine is transferred from CoA to a specific serine of apo-DCP.

It localises to the cytoplasm. It functions in the pathway cell wall biogenesis; lipoteichoic acid biosynthesis. Carrier protein involved in the D-alanylation of lipoteichoic acid (LTA). The loading of thioester-linked D-alanine onto DltC is catalyzed by D-alanine--D-alanyl carrier protein ligase DltA. The DltC-carried D-alanyl group is further transferred to cell membrane phosphatidylglycerol (PG) by forming an ester bond, probably catalyzed by DltD. D-alanylation of LTA plays an important role in modulating the properties of the cell wall in Gram-positive bacteria, influencing the net charge of the cell wall. The polypeptide is D-alanyl carrier protein (Streptococcus uberis (strain ATCC BAA-854 / 0140J)).